A 648-amino-acid polypeptide reads, in one-letter code: NAD(P)H-quinone oxidoreductase subunit 5, chloroplastic (648 aa).

The next 16 helical transmembrane spans lie at 7-27 (AIWL…IGLL), 39-59 (LHGA…LGVL), 89-109 (VDPL…LVMI), 124-144 (FFVY…SPNL), 147-167 (VYGF…FWFT), 189-209 (LLLG…ASIA), 215-235 (LLIA…LVFM), 258-278 (TPIS…FLVA), 289-309 (LVME…ATMA), 327-347 (LGYM…FHLT), 354-374 (ALLF…VGFS), 395-415 (AMTF…ACFW), 432-452 (WLIA…IYFL), 472-492 (LGMV…GSLG), 518-538 (LAEF…GISL), and 625-645 (FYIL…TTHL).

The protein belongs to the complex I subunit 5 family. In terms of assembly, NDH is composed of at least 16 different subunits, 5 of which are encoded in the nucleus.

It is found in the plastid. The protein resides in the chloroplast thylakoid membrane. The enzyme catalyses a plastoquinone + NADH + (n+1) H(+)(in) = a plastoquinol + NAD(+) + n H(+)(out). It carries out the reaction a plastoquinone + NADPH + (n+1) H(+)(in) = a plastoquinol + NADP(+) + n H(+)(out). NDH shuttles electrons from NAD(P)H:plastoquinone, via FMN and iron-sulfur (Fe-S) centers, to quinones in the photosynthetic chain and possibly in a chloroplast respiratory chain. The immediate electron acceptor for the enzyme in this species is believed to be plastoquinone. Couples the redox reaction to proton translocation, and thus conserves the redox energy in a proton gradient. This chain is NAD(P)H-quinone oxidoreductase subunit 5, chloroplastic (ndhF), found in Nephroselmis olivacea (Green alga).